Consider the following 140-residue polypeptide: Transcription antitermination protein NusB (140 aa).

It belongs to the NusB family.

In terms of biological role, involved in transcription antitermination. Required for transcription of ribosomal RNA (rRNA) genes. Binds specifically to the boxA antiterminator sequence of the ribosomal RNA (rrn) operons. The sequence is that of Transcription antitermination protein NusB from Sorangium cellulosum (strain So ce56) (Polyangium cellulosum (strain So ce56)).